The chain runs to 1943 residues: Protocadherin-15 (1943 aa).

The signal sequence occupies residues 1–26 (MFLQFAVWKCLPHGILIASLLVVSWG). Over 27-1381 (QYDDDWQYED…GESLGYTEGA (1355 aa)) the chain is Extracellular. Residues Cys37 and Cys125 are joined by a disulfide bond. Cadherin domains are found at residues 45–152 (PATI…SPTF), 153–270 (KHES…GPMF), 283–400 (RPLT…SPYF), 401–514 (TMPS…TPTF), 515–621 (PEIS…PPRF), 622–722 (PQLM…APVF), 724–824 (PYLP…SPVF), 825–931 (TNST…PPVF), 932–1040 (SKRI…IPRF), 1042–1149 (QEEY…PPVF), and 1150–1264 (QKKF…PPTL). 3 N-linked (GlcNAc...) asparagine glycosylation sites follow: Asn57, Asn102, and Asn206. Asn424, Asn564, Asn667, Asn729, Asn773, Asn826, and Asn856 each carry an N-linked (GlcNAc...) asparagine glycan. N-linked (GlcNAc...) asparagine glycans are attached at residues Asn1069, Asn1089, and Asn1180. A helical transmembrane segment spans residues 1382-1402 (LLALAFIIILCCIPAILVVLV). Residues 1403-1943 (SYRQFKVRQA…VQPHSQSTSL (541 aa)) are Cytoplasmic-facing. Disordered regions lie at residues 1425 to 1453 (PAAKPAAPVPAAPAPPPPPPPPPPGAHLY), 1475 to 1533 (GNNS…STHN), and 1714 to 1865 (ILNS…EPHR). A compositionally biased stretch (pro residues) spans 1431–1449 (APVPAAPAPPPPPPPPPPG). 2 stretches are compositionally biased toward basic and acidic residues: residues 1480–1489 (PEDRSSHRDG) and 1498–1509 (ESHEPAHVEGPL). Composition is skewed to pro residues over residues 1742–1760 (PHPPSISAPLPHPPLPRPP) and 1769–1779 (PLSPPNPPPPQ). Residues 1784 to 1795 (SLPISTPPTSSL) show a composition bias toward low complexity. Residues 1796 to 1821 (PLPPPLSLPPPPRPPAPRLFPQPPST) are compositionally biased toward pro residues. Over residues 1822–1834 (SIPSTDSISAPAA) the composition is skewed to low complexity. Positions 1846–1858 (TTSTTQPPASNPQ) are enriched in polar residues.

Antiparallel heterodimer with CDH23. Found in a complex with TMIE and LHFPL5. Interacts with LHFPL5/TMHS; this interaction is required for efficient localization to hair bundles. Interacts with MYO7A. Interacts with USH1G; this interaction may recruit USH1G to the plasma membrane. Interacts with TOMT. Isoforms CD1 and CD3 interact with TMC1 (via N-terminus) and TMC2 (via N-terminus). Interacts with PIEZO1. As to expression, expressed in brain and sensory epithelium of the developing inner ear. Expressed in the retina, in the photoreceptor inner segments, the outer plexiform layer, the inner nuclei layer and the ganglion cell layer and, more diffusely in the inner plexiform layer (at protein level). Not detected in the retinal pigment epithelium (at protein level). Expressed in the spleen, dorsal root ganglion, dorsal aspect of neural tube, floor plate and ependymal cells adjacent to the neural canal.

The protein localises to the cell membrane. It is found in the secreted. Its function is as follows. Calcium-dependent cell-adhesion protein. Required for inner ear neuroepithelial cell elaboration and cochlear function. Probably involved in the maintenance of normal retinal function. In Mus musculus (Mouse), this protein is Protocadherin-15 (Pcdh15).